A 362-amino-acid chain; its full sequence is Putative transport protein BB_0006 (362 aa).

Transmembrane regions (helical) follow at residues 20 to 40 (FYCI…EAVF), 43 to 63 (LAIS…LARF), 68 to 88 (FLIV…IFSF), 144 to 164 (EIIG…FLLS), 212 to 232 (ILVF…WAVL), 234 to 254 (FVFN…IVIT), 265 to 285 (IVLY…NILE), and 304 to 326 (LFFW…TVIV).

It belongs to the autoinducer-2 exporter (AI-2E) (TC 2.A.86) family.

It localises to the cell membrane. This is Putative transport protein BB_0006 from Borreliella burgdorferi (strain ATCC 35210 / DSM 4680 / CIP 102532 / B31) (Borrelia burgdorferi).